We begin with the raw amino-acid sequence, 463 residues long: Putative F-box protein At3g29830 (463 aa).

One can recognise an F-box domain in the interval 7–55 (RDRISSLPDVVLVMILSFLSFKDNVKTSILSKRWRNICYEAKNISFKES).

The sequence is that of Putative F-box protein At3g29830 from Arabidopsis thaliana (Mouse-ear cress).